Reading from the N-terminus, the 166-residue chain is Small ribosomal subunit protein eS10 (166 aa).

Positions 95-166 (RRQTRPETAR…FGRGRGQQPQ (72 aa)) are disordered. A compositionally biased stretch (basic and acidic residues) spans 98–129 (TRPETARPRPKGLEGERPARLARGEGDRDAYR). The span at 143-154 (AGAGAATEFQFR) shows a compositional bias: low complexity. Residues 155–166 (GGFGRGRGQQPQ) show a composition bias toward gly residues.

It belongs to the eukaryotic ribosomal protein eS10 family. As to quaternary structure, component of the small ribosomal subunit.

The protein localises to the cytoplasm. Its subcellular location is the nucleus. It localises to the nucleolus. Its function is as follows. Component of the 40S ribosomal subunit. The ribosome is a large ribonucleoprotein complex responsible for the synthesis of proteins in the cell. The sequence is that of Small ribosomal subunit protein eS10 (rps10) from Ictalurus punctatus (Channel catfish).